The sequence spans 1046 residues: UDP-N-acetylglucosamine--peptide N-acetylglucosaminyltransferase 110 kDa subunit (1046 aa).

N-acetylalanine is present on Ala-2. Ser-3 and Ser-4 each carry phosphoserine; by GSK3-beta; alternate. O-linked (GlcNAc) serine; alternate glycans are attached at residues Ser-3 and Ser-4. A Phosphoserine modification is found at Ser-20. TPR repeat units lie at residues 21-54, 89-122, 123-156, 157-190, 191-224, 225-258, 259-292, 293-326, 327-360, 361-394, 395-428, and 429-462; these read FQGL…EPDN, AEAY…KPDF, IDGY…NPDL, YCVR…QPNF, AVAW…DPNF, LDAY…SPNH, AVVH…QPHF, PDAY…CPTH, ADSL…FPEF, AAAH…SPTF, ADAY…NPAF, and ADAH…KPDF. Residue Ser-399 is glycosylated (O-linked (GlcNAc) serine; by autocatalysis). Residue Thr-454 is modified to Phosphothreonine. The TPR 13; truncated repeat unit spans residues 463-473; the sequence is PDAYCNLAHCL. Residues 464-466 carry the DFP motif motif; the sequence is DAY. Positions 487–503 match the Nuclear localization signal motif; it reads KKLVSIVAEQLEKNRLP. His-508 acts as the Proton acceptor in catalysis. UDP is bound by residues Gln-849, Lys-852, 906 to 908, 911 to 914, 930 to 932, and Asp-935; these read APK, HVRR, and HTT. Tyr-989 carries the phosphotyrosine modification. Positions 991–1010 are required for phosphatidylinositol 3,4,5-triphosphate binding; it reads KKIRGKVWKQRISSPLFNTK.

Belongs to the glycosyltransferase 41 family. O-GlcNAc transferase subfamily. As to quaternary structure, monomer; may exist in different oligomerization states in cells. Homotrimer, oligomerizes via TPR repeats 6 and 7. Trimerization is not necessary for activity in vitro, however it increases affinity for UDP-GlcNAc. Component of a THAP1/THAP3-HCFC1-OGT complex. Component of the NSL complex at least composed of MOF/KAT8, KANSL1, KANSL2, KANSL3, MCRS1, PHF20, OGT1/OGT, WDR5 and HCFC1. Found in a complex with KIF5B, RHOT1, RHOT2 and TRAK1. Found in a complex composed of at least SINHCAF, SIN3A, HDAC1, SAP30, RBBP4, OGT and TET1. Component of a complex composed of KMT2E/MLL5, OGT and USP7; the complex stabilizes KMT2E/MLL5, preventing KMT2E/MLL5 ubiquitination and proteasomal-mediated degradation. Interacts (via TPRs 1-6) with SIN3A; the interaction mediates transcriptional repression in parallel with histone deacetylase. Interacts (via TPR 5-6) with TET1, TET2 and TET3. Interacts (via TPR repeats 6 and 7) with ATXN10. Interacts with NSD2. Interacts with PROSER1; this interaction mediates TET2 O-GlcNAcylation and stability by promoting the interaction between OGT and TET2. Ubiquitinated by the SCF(FBXO31) complex, leading to its proteasomal degradation. In terms of processing, phosphorylation on Ser-3 or Ser-4 by GSK3-beta positively regulates its activity. Phosphorylation at Thr-454 by AMPK promotes nuclear localization. Post-translationally, glycosylated via autocatalysis; O-GlcNAcylation at Ser-399 promotes nuclear localization.

The protein localises to the cytoplasm. It is found in the nucleus. The protein resides in the cell membrane. It localises to the mitochondrion membrane. Its subcellular location is the cell projection. It catalyses the reaction L-seryl-[protein] + UDP-N-acetyl-alpha-D-glucosamine = 3-O-(N-acetyl-beta-D-glucosaminyl)-L-seryl-[protein] + UDP + H(+). It carries out the reaction L-threonyl-[protein] + UDP-N-acetyl-alpha-D-glucosamine = 3-O-(N-acetyl-beta-D-glucosaminyl)-L-threonyl-[protein] + UDP + H(+). The protein operates within protein modification; protein glycosylation. With respect to regulation, subject to product inhibition by UDP. Catalyzes the transfer of a single N-acetylglucosamine from UDP-GlcNAc to a serine or threonine residue in cytoplasmic and nuclear proteins resulting in their modification with a beta-linked N-acetylglucosamine (O-GlcNAc). Glycosylates a large and diverse number of proteins including histone H2B, AKT1, AMPK, ATG4B, CAPRIN1, EZH2, FNIP1, GSDMD, KRT7, LMNA, LMNB1, LMNB2, RPTOR, HOXA1, PFKL, KMT2E/MLL5, MAPT/TAU, TET2, RBL2, RET, NOD2 and HCFC1. Can regulate their cellular processes via cross-talk between glycosylation and phosphorylation or by affecting proteolytic processing. Involved in insulin resistance in muscle and adipocyte cells via glycosylating insulin signaling components and inhibiting the 'Thr-308' phosphorylation of AKT1, enhancing IRS1 phosphorylation and attenuating insulin signaling. Involved in glycolysis regulation by mediating glycosylation of 6-phosphofructokinase PFKL, inhibiting its activity. Plays a key role in chromatin structure by mediating O-GlcNAcylation of 'Ser-112' of histone H2B: recruited to CpG-rich transcription start sites of active genes via its interaction with TET proteins (TET1, TET2 or TET3). As part of the NSL complex indirectly involved in acetylation of nucleosomal histone H4 on several lysine residues. O-GlcNAcylation of 'Ser-75' of EZH2 increases its stability, and facilitating the formation of H3K27me3 by the PRC2/EED-EZH2 complex. Stabilizes KMT2E/MLL5 by mediating its glycosylation, thereby preventing KMT2E/MLL5 ubiquitination. Regulates circadian oscillation of the clock genes and glucose homeostasis in the liver. Stabilizes clock proteins BMAL1 and CLOCK through O-glycosylation, which prevents their ubiquitination and subsequent degradation. Promotes the CLOCK-BMAL1-mediated transcription of genes in the negative loop of the circadian clock such as PER1/2 and CRY1/2. O-glycosylates HCFC1 and regulates its proteolytic processing and transcriptional activity. Component of a THAP1/THAP3-HCFC1-OGT complex that is required for the regulation of the transcriptional activity of RRM1. Regulates mitochondrial motility in neurons by mediating glycosylation of TRAK1. Promotes autophagy by mediating O-glycosylation of ATG4B. Acts as a regulator of mTORC1 signaling by mediating O-glycosylation of RPTOR and FNIP1: O-GlcNAcylation of RPTOR in response to glucose sufficiency promotes activation of the mTORC1 complex. This is UDP-N-acetylglucosamine--peptide N-acetylglucosaminyltransferase 110 kDa subunit (Ogt) from Mus musculus (Mouse).